Reading from the N-terminus, the 60-residue chain is Large ribosomal subunit protein bL32A (60 aa).

The segment covering 1–19 has biased composition (basic residues); sequence MAVPKRRMSRSNTRSRRSQ. A disordered region spans residues 1–21; that stretch reads MAVPKRRMSRSNTRSRRSQWK.

This sequence belongs to the bacterial ribosomal protein bL32 family.

The chain is Large ribosomal subunit protein bL32A from Nocardia farcinica (strain IFM 10152).